The following is a 383-amino-acid chain: Putative glutamate--cysteine ligase 2-2 (383 aa).

The tract at residues 35–56 (RGDRDGAGGPPGGADPDGDLDG) is disordered.

This sequence belongs to the glutamate--cysteine ligase type 2 family. YbdK subfamily.

It catalyses the reaction L-cysteine + L-glutamate + ATP = gamma-L-glutamyl-L-cysteine + ADP + phosphate + H(+). In terms of biological role, ATP-dependent carboxylate-amine ligase which exhibits weak glutamate--cysteine ligase activity. In Frankia alni (strain DSM 45986 / CECT 9034 / ACN14a), this protein is Putative glutamate--cysteine ligase 2-2.